A 466-amino-acid polypeptide reads, in one-letter code: FAD-dependent monooxygenase dpfgE (466 aa).

The N-terminal stretch at 1-23 is a signal peptide; the sequence is MSQKPFRVIIVGGSVTGLTLAHS. Positions 35, 49, and 108 each coordinate FAD. Residues asparagine 128 and asparagine 192 are each glycosylated (N-linked (GlcNAc...) asparagine). FAD is bound by residues aspartate 312 and alanine 325. Residue asparagine 376 is glycosylated (N-linked (GlcNAc...) asparagine). A helical transmembrane segment spans residues 443-465; that stretch reads GVVRNVFFLLAATVIVAWVCRLW.

Belongs to the paxM FAD-dependent monooxygenase family. The cofactor is FAD.

The protein resides in the membrane. The protein operates within secondary metabolite biosynthesis; terpenoid biosynthesis. Functionally, FAD-dependent monooxygenase; part of the gene cluster that mediates the biosynthesis of diterpenoid pyrones. The first step of the pathway is the synthesis of the alpha-pyrone moiety by the polyketide synthase dpfgA via condensation of one acetyl-CoA starter unit with 3 malonyl-CoA units and 2 methylations. The alpha-pyrone is then combined with geranylgeranyl pyrophosphate (GGPP) formed by the GGPP synthase dpfgD through the action of the prenyltransferase dpfgC to yield a linear alpha-pyrone diterpenoid. Subsequent steps in the diterpenoid pyrone biosynthetic pathway involve the decalin core formation, which is initiated by the epoxidation of the C10-C11 olefin by the FAD-dependent oxidoreductase dpfgE, and is followed by a cyclization cascade catalyzed by the terpene cyclase dpfgB. The short chain dehydrogenase/reductase dpfgG then oxidizes the 8S hydroxy group to a ketone and the short chain dehydrogenase/reductase dpfgH reduces the ketone to the 8R hydroxy group to yield higginsianin B. Higginsianin B is further methylated by the methyltransferase dpfgI to produce the intermediate named FDDP B. The cytochrome P450 monooxygenase dfgpJ then catalyzes a three-step oxidation at C-27 to generate a carboxylic acid as well as C-26 hydroxylation. Finally, methyltransferase dpfgK methylates the carboxylic acid generated by dpfgJ, yielding the final diterpenoid pyrones from the pathway which were named FDDP D and FDDP E. In Gibberella zeae (strain ATCC MYA-4620 / CBS 123657 / FGSC 9075 / NRRL 31084 / PH-1) (Wheat head blight fungus), this protein is FAD-dependent monooxygenase dpfgE.